The chain runs to 201 residues: Lipopolysaccharide core heptose(II)-phosphate phosphatase (201 aa).

The first 35 residues, 1–35 (MLAFTLRFIKNKRYLATLAGALVIIAGLTSQHAWS), serve as a signal peptide directing secretion.

It belongs to the phosphoglycerate mutase family. Ais subfamily.

It is found in the periplasm. It functions in the pathway bacterial outer membrane biogenesis; lipopolysaccharide metabolism. Functionally, catalyzes the dephosphorylation of heptose(II) of the outer membrane lipopolysaccharide core. The chain is Lipopolysaccharide core heptose(II)-phosphate phosphatase from Salmonella schwarzengrund (strain CVM19633).